The primary structure comprises 377 residues: Chaperone protein DnaJ (377 aa).

The 66-residue stretch at 5-70 (DFYEVLGVER…SKRAAYDQYG (66 aa)) folds into the J domain. The CR-type zinc finger occupies 136 to 214 (GTTVTIRVPT…CHGQGRVEEQ (79 aa)). 8 residues coordinate Zn(2+): Cys149, Cys152, Cys166, Cys169, Cys188, Cys191, Cys202, and Cys205. CXXCXGXG motif repeat units lie at residues 149–156 (CKTCNGSG), 166–173 (CTTCGGIG), 188–195 (CPRCHGTG), and 202–209 (CGSCHGQG).

It belongs to the DnaJ family. In terms of assembly, homodimer. Zn(2+) serves as cofactor.

It localises to the cytoplasm. Functionally, participates actively in the response to hyperosmotic and heat shock by preventing the aggregation of stress-denatured proteins and by disaggregating proteins, also in an autonomous, DnaK-independent fashion. Unfolded proteins bind initially to DnaJ; upon interaction with the DnaJ-bound protein, DnaK hydrolyzes its bound ATP, resulting in the formation of a stable complex. GrpE releases ADP from DnaK; ATP binding to DnaK triggers the release of the substrate protein, thus completing the reaction cycle. Several rounds of ATP-dependent interactions between DnaJ, DnaK and GrpE are required for fully efficient folding. Also involved, together with DnaK and GrpE, in the DNA replication of plasmids through activation of initiation proteins. The protein is Chaperone protein DnaJ of Pseudomonas aeruginosa (strain LESB58).